The following is a 139-amino-acid chain: Protein FAM216B (139 aa).

The protein belongs to the FAM216 family.

The polypeptide is Protein FAM216B (FAM216B) (Homo sapiens (Human)).